The chain runs to 128 residues: Claw keratin (128 aa).

Tandem repeats lie at residues 83 to 91 (GGYGGLGGY) and 92 to 100 (GGYGGLGGY). Residues 83 to 104 (GGYGGLGGYGGYGGLGGYGGYG) form a 3 X 9 AA tandem repeats, Gly-rich region. One copy of the 3; approximate repeat lies at 101–109 (GGYGGFGSC).

Belongs to the avian keratin family. In terms of tissue distribution, abundantly expressed in the claw and at a low level in feather tissue.

This is Claw keratin (CKER1) from Gallus gallus (Chicken).